Here is a 511-residue protein sequence, read N- to C-terminus: Histidine ammonia-lyase (511 aa).

Residues 142 to 144 constitute a cross-link (5-imidazolinone (Ala-Gly)); the sequence is ASG. Position 143 is a 2,3-didehydroalanine (Ser) (serine 143).

The protein belongs to the PAL/histidase family. Post-translationally, contains an active site 4-methylidene-imidazol-5-one (MIO), which is formed autocatalytically by cyclization and dehydration of residues Ala-Ser-Gly.

It localises to the cytoplasm. The catalysed reaction is L-histidine = trans-urocanate + NH4(+). It functions in the pathway amino-acid degradation; L-histidine degradation into L-glutamate; N-formimidoyl-L-glutamate from L-histidine: step 1/3. The protein is Histidine ammonia-lyase of Brucella anthropi (strain ATCC 49188 / DSM 6882 / CCUG 24695 / JCM 21032 / LMG 3331 / NBRC 15819 / NCTC 12168 / Alc 37) (Ochrobactrum anthropi).